The following is a 173-amino-acid chain: Shikimate kinase 1 (173 aa).

14–19 (GAGKST) provides a ligand contact to ATP. S18 lines the Mg(2+) pocket. The substrate site is built by D36, R60, and G82. R120 is a binding site for ATP. Residue R140 coordinates substrate. Q157 contacts ATP.

The protein belongs to the shikimate kinase family. As to quaternary structure, monomer. The cofactor is Mg(2+).

The protein localises to the cytoplasm. It carries out the reaction shikimate + ATP = 3-phosphoshikimate + ADP + H(+). Its pathway is metabolic intermediate biosynthesis; chorismate biosynthesis; chorismate from D-erythrose 4-phosphate and phosphoenolpyruvate: step 5/7. In terms of biological role, catalyzes the specific phosphorylation of the 3-hydroxyl group of shikimic acid using ATP as a cosubstrate. The polypeptide is Shikimate kinase 1 (Yersinia pseudotuberculosis serotype O:1b (strain IP 31758)).